The following is a 313-amino-acid chain: Methionyl-tRNA formyltransferase (313 aa).

Positions 32-51 are disordered; that stretch reads QPDRRKGRGKELQPPPAKRK. 109 to 112 is a binding site for (6S)-5,6,7,8-tetrahydrofolate; that stretch reads SLLP.

Belongs to the Fmt family.

It carries out the reaction L-methionyl-tRNA(fMet) + (6R)-10-formyltetrahydrofolate = N-formyl-L-methionyl-tRNA(fMet) + (6S)-5,6,7,8-tetrahydrofolate + H(+). In terms of biological role, attaches a formyl group to the free amino group of methionyl-tRNA(fMet). The formyl group appears to play a dual role in the initiator identity of N-formylmethionyl-tRNA by promoting its recognition by IF2 and preventing the misappropriation of this tRNA by the elongation apparatus. This Natranaerobius thermophilus (strain ATCC BAA-1301 / DSM 18059 / JW/NM-WN-LF) protein is Methionyl-tRNA formyltransferase.